A 266-amino-acid chain; its full sequence is Glutamate racemase (266 aa).

Residues 9–10 and 41–42 contribute to the substrate site; these read DS and YG. Cys72 functions as the Proton donor/acceptor in the catalytic mechanism. Residue 73 to 74 participates in substrate binding; it reads NT. Cys183 serves as the catalytic Proton donor/acceptor. A substrate-binding site is contributed by 184 to 185; the sequence is TH.

It belongs to the aspartate/glutamate racemases family.

The enzyme catalyses L-glutamate = D-glutamate. It functions in the pathway cell wall biogenesis; peptidoglycan biosynthesis. Functionally, provides the (R)-glutamate required for cell wall biosynthesis. The protein is Glutamate racemase of Listeria innocua serovar 6a (strain ATCC BAA-680 / CLIP 11262).